The primary structure comprises 255 residues: Taurine import ATP-binding protein TauB (255 aa).

Residues 2-229 (LQISHLYADY…RFVAGESSRS (228 aa)) form the ABC transporter domain. 34-41 (GPSGCGKT) contacts ATP.

Belongs to the ABC transporter superfamily. Taurine importer (TC 3.A.1.17.1) family. As to quaternary structure, the complex is composed of two ATP-binding proteins (TauB), two transmembrane proteins (TauC) and a solute-binding protein (TauA).

Its subcellular location is the cell inner membrane. It carries out the reaction taurine(out) + ATP + H2O = taurine(in) + ADP + phosphate + H(+). Part of the ABC transporter complex TauABC involved in taurine import. Responsible for energy coupling to the transport system. The chain is Taurine import ATP-binding protein TauB from Escherichia coli (strain K12).